We begin with the raw amino-acid sequence, 171 residues long: Inosine/xanthosine triphosphatase (171 aa).

8 to 13 contacts substrate; sequence TTNPAK. Mg(2+) is bound at residue Glu-38.

It belongs to the YjjX NTPase family. As to quaternary structure, homodimer. The cofactor is Mg(2+). Mn(2+) serves as cofactor.

The catalysed reaction is XTP + H2O = XDP + phosphate + H(+). It catalyses the reaction ITP + H2O = IDP + phosphate + H(+). Functionally, phosphatase that hydrolyzes non-canonical purine nucleotides such as XTP and ITP to their respective diphosphate derivatives. Probably excludes non-canonical purines from DNA/RNA precursor pool, thus preventing their incorporation into DNA/RNA and avoiding chromosomal lesions. This is Inosine/xanthosine triphosphatase from Klebsiella pneumoniae (strain 342).